We begin with the raw amino-acid sequence, 366 residues long: MALSAIGFEGYEKRLEVTFFEPSIFQDSKGLGLRALTKSQLDEILTPAACTIVSSLSNDQLDSYVLSESSFFVYPYKVIIKTCGTTKLLLSIPPLLKLAGELSLSVKSVKYTRGSFLCPGGQPFPHRSFSEEVSVLDGHFTQLGLNSVAYLMGNDDETKKWHVYAASAQDSSNCNNNVYTLEMCMTGLDREKAAVFYKDEADKTGSMTDNSGIRKILPKSEICDFEFEPCGYSMNSIEGDAISTIHVTPEDGFSYASFEAVGYDFNTLDLSQLVTRVLSCFEPKQFSVAVHSSVGANSYKPEITVDLEDYGCRERTFESLGEESGTVMYQTFEKLGKYCGSPRSTLKCEWSSNNSCSSEDEKDEGI.

Active-site residues include E9 and E12. Substrate is bound at residue E68. The active-site Schiff-base intermediate with substrate; via pyruvic acid is the S69. A Pyruvic acid (Ser); by autocatalysis modification is found at S69. Residue C83 is the Proton donor; for catalytic activity of the active site. Active-site proton acceptor; for processing activity residues include S233 and H246. Residue E250 coordinates substrate.

The protein belongs to the eukaryotic AdoMetDC family. Pyruvate serves as cofactor. Post-translationally, is synthesized initially as an inactive proenzyme. Formation of the active enzyme involves a self-maturation process in which the active site pyruvoyl group is generated from an internal serine residue via an autocatalytic post-translational modification. Two non-identical subunits are generated from the proenzyme in this reaction, and the pyruvate is formed at the N-terminus of the alpha chain, which is derived from the carboxyl end of the proenzyme. The post-translation cleavage follows an unusual pathway, termed non-hydrolytic serinolysis, in which the side chain hydroxyl group of the serine supplies its oxygen atom to form the C-terminus of the beta chain, while the remainder of the serine residue undergoes an oxidative deamination to produce ammonia and the pyruvoyl group blocking the N-terminus of the alpha chain.

It carries out the reaction S-adenosyl-L-methionine + H(+) = S-adenosyl 3-(methylsulfanyl)propylamine + CO2. It functions in the pathway amine and polyamine biosynthesis; S-adenosylmethioninamine biosynthesis; S-adenosylmethioninamine from S-adenosyl-L-methionine: step 1/1. Functionally, essential for biosynthesis of the polyamines spermidine and spermine. Essential for polyamine homeostasis, and normal plant embryogenesis, growth and development. The protein is S-adenosylmethionine decarboxylase proenzyme 1 of Arabidopsis thaliana (Mouse-ear cress).